A 401-amino-acid polypeptide reads, in one-letter code: Multidrug resistance protein MdtH (401 aa).

A run of 11 helical transmembrane segments spans residues 13 to 33 (YFLL…FPLI), 34 to 54 (SIRF…ALGL), 99 to 116 (PWIL…GTLF), 139 to 159 (LLMM…SWLL), 165 to 185 (FVCW…AWLL), 214 to 234 (VLTL…LPIV), 243 to 263 (AAVK…LYPL), 277 to 297 (LMAG…ITHL), 299 to 319 (TLFM…PARE), 340 to 360 (LGLA…YDTG), and 368 to 388 (LPWF…YWQF).

The protein belongs to the major facilitator superfamily. DHA1 family. MdtH (TC 2.A.1.2.21) subfamily.

Its subcellular location is the cell inner membrane. This Yersinia pseudotuberculosis serotype O:1b (strain IP 31758) protein is Multidrug resistance protein MdtH.